The sequence spans 376 residues: MSSISPFVAIRRDLHKIPELGFQEFKTQQYLLRYIHALPQERLEIQTWKTGIFVKVKGTAPRKMIGYRTDIDGLPIKEETGLPYSSEHEGNMHACGHDVHMSIALGLLTHFAEHPIQDDLLFIFQPAEEGPGGAKPMLESEIMKVWKPDMILALHIAPEYPVGTIATKEGLLFANTSELFIDLKGKGGHAAFPHLANDMVVAACSLVTQLQSIVARNVDPLDSAVITIGKISGGTVQNVIAEHARLEGTIRTLSVDSMKKVKERIEAMVSGIKMAYQCEAEIDYGSMYHQVYNDPELTTEFIQFAENYQGIRFIRCKEAMTGEDFGYMLAEIPGFMFWLGVDSPYGLHHAKLTPNEAAIDQGISFLISYITWKGNN.

D70 is an active-site residue. Catalysis depends on E129, which acts as the Proton acceptor.

It belongs to the peptidase M20A family. N-acetyldiaminopimelate deacetylase subfamily.

The enzyme catalyses N-acetyl-(2S,6S)-2,6-diaminopimelate + H2O = (2S,6S)-2,6-diaminopimelate + acetate. Its pathway is amino-acid biosynthesis; L-lysine biosynthesis via DAP pathway; LL-2,6-diaminopimelate from (S)-tetrahydrodipicolinate (acetylase route): step 3/3. Functionally, catalyzes the conversion of N-acetyl-diaminopimelate to diaminopimelate and acetate. The protein is N-acetyldiaminopimelate deacetylase of Geobacillus sp. (strain WCH70).